The primary structure comprises 432 residues: Adenylosuccinate synthetase (432 aa).

GTP is bound by residues Gly-12–Lys-18 and Gly-40–Thr-42. The active-site Proton acceptor is Asp-13. Mg(2+) contacts are provided by Asp-13 and Gly-40. IMP is bound by residues Asp-13–Lys-16, Asn-38–His-41, Thr-132, Arg-146, Gln-226, Thr-241, and Arg-305. The active-site Proton donor is His-41. Thr-301–Arg-307 contributes to the substrate binding site. GTP is bound by residues Arg-307, Lys-333 to Asp-335, and Ser-415 to Ser-417.

This sequence belongs to the adenylosuccinate synthetase family. As to quaternary structure, homodimer. Mg(2+) serves as cofactor.

It localises to the cytoplasm. It catalyses the reaction IMP + L-aspartate + GTP = N(6)-(1,2-dicarboxyethyl)-AMP + GDP + phosphate + 2 H(+). It functions in the pathway purine metabolism; AMP biosynthesis via de novo pathway; AMP from IMP: step 1/2. Its function is as follows. Plays an important role in the de novo pathway of purine nucleotide biosynthesis. Catalyzes the first committed step in the biosynthesis of AMP from IMP. The sequence is that of Adenylosuccinate synthetase from Sinorhizobium fredii (strain NBRC 101917 / NGR234).